A 141-amino-acid polypeptide reads, in one-letter code: Large ribosomal subunit protein uL23B (141 aa).

A disordered region spans residues M1 to A22.

The protein belongs to the universal ribosomal protein uL23 family. As to quaternary structure, component of the large ribosomal subunit (LSU). Mature yeast ribosomes consist of a small (40S) and a large (60S) subunit. The 40S small subunit contains 1 molecule of ribosomal RNA (18S rRNA) and at least 33 different proteins. The large 60S subunit contains 3 rRNA molecules (25S, 5.8S and 5S rRNA) and at least 46 different proteins. uL23 is associated with the polypeptide exit tunnel.

Its subcellular location is the cytoplasm. Its function is as follows. This protein binds to a specific region on the 26S rRNA. In terms of biological role, component of the ribosome, a large ribonucleoprotein complex responsible for the synthesis of proteins in the cell. The small ribosomal subunit (SSU) binds messenger RNAs (mRNAs) and translates the encoded message by selecting cognate aminoacyl-transfer RNA (tRNA) molecules. The large subunit (LSU) contains the ribosomal catalytic site termed the peptidyl transferase center (PTC), which catalyzes the formation of peptide bonds, thereby polymerizing the amino acids delivered by tRNAs into a polypeptide chain. The nascent polypeptides leave the ribosome through a tunnel in the LSU and interact with protein factors that function in enzymatic processing, targeting, and the membrane insertion of nascent chains at the exit of the ribosomal tunnel. uL23 is a major component of the universal docking site for these factors at the polypeptide exit tunnel. The sequence is that of Large ribosomal subunit protein uL23B (rpl2502) from Schizosaccharomyces pombe (strain 972 / ATCC 24843) (Fission yeast).